The primary structure comprises 555 residues: WRKY transcription factor WRKY24 (555 aa).

2 disordered regions span residues 38–65 (GGGG…PSSF) and 132–248 (QTAP…CTFP). Positions 51–61 (PSLPLSPPPVS) are enriched in pro residues. Residues 163-194 (QQQQQPWGYQQQPAGMDAGANAASFGAAPFQA) are compositionally biased toward low complexity. The segment at residues 214 to 278 (SQRRSSDDGY…YKGTHNHAKP (65 aa)) is a DNA-binding region (WRKY 1). The short motif at 253 to 259 (KKKVERS) is the Nuclear localization signal element. Residues 270–367 (KGTHNHAKPQ…EGISMAGNRT (98 aa)) are disordered. Polar residues-rich tracts occupy residues 277-294 (KPQN…QVLQ) and 310-320 (TAATPENSSAS). Over residues 347–356 (DSKRWRKDGD) the composition is skewed to basic and acidic residues. A DNA-binding region (WRKY 2) is located at residues 379–444 (SDIDILDDGY…YEGKHNHDVP (66 aa)). Residues 466 to 555 (HPYLPNQPPP…DDMFFQNSLY (90 aa)) are transcription repression of gibberellic acid (GA)-induced promoters. 2 disordered regions span residues 471–498 (NQPP…GQGP) and 513–555 (GFDD…NSLY).

This sequence belongs to the WRKY group II-a family. As to expression, expressed in aleurone cells. Mostly expressed in aleurone layers and leaves, and, to a lower extent, in roots, panicles and embryos.

The protein localises to the nucleus. Functionally, transcription repressor. Interacts specifically with the W box (5'-(T)TGAC[CT]-3'), a frequently occurring elicitor-responsive cis-acting element. Negative regulator of both gibberellic acid (GA) and abscisic acid (ABA) signaling in aleurone cells, probably by interfering with GAM1, via the specific repression of GA- and ABA-induced promoters. The sequence is that of WRKY transcription factor WRKY24 from Oryza sativa subsp. indica (Rice).